The primary structure comprises 339 residues: Ribosomal RNA small subunit methyltransferase C (339 aa).

It belongs to the methyltransferase superfamily. RsmC family. In terms of assembly, monomer.

It is found in the cytoplasm. The enzyme catalyses guanosine(1207) in 16S rRNA + S-adenosyl-L-methionine = N(2)-methylguanosine(1207) in 16S rRNA + S-adenosyl-L-homocysteine + H(+). Functionally, specifically methylates the guanine in position 1207 of 16S rRNA in the 30S particle. The chain is Ribosomal RNA small subunit methyltransferase C from Aliivibrio fischeri (strain MJ11) (Vibrio fischeri).